The primary structure comprises 256 residues: uncharacterized protein (256 aa).

Over residues alanine 201 to glycine 214 the composition is skewed to basic and acidic residues. The interval alanine 201–serine 231 is disordered. A compositionally biased stretch (acidic residues) spans glycine 215–serine 231.

It localises to the mitochondrion. This is an uncharacterized protein from Zea mays (Maize).